A 146-amino-acid chain; its full sequence is VHWSAEEKQLITSIWGKVNVADCGAEALARLLIVYPWTQRFFASFGNLSSATAISGNPNVKAHGKKVLTSFGDAVKNLDNIKGTFAQLSELHCNKLHVDPENFKLLGDILVIVLAAHFGKDFTPECQAAWQKLVRVVAHALARKYH.

The Globin domain occupies 2 to 146 (HWSAEEKQLI…VAHALARKYH (145 aa)). The heme b site is built by His63 and His92.

It belongs to the globin family. As to quaternary structure, heterotetramer of two alpha chains and two beta chains. As to expression, red blood cells.

Its function is as follows. Involved in oxygen transport from the lung to the various peripheral tissues. The polypeptide is Hemoglobin subunit beta (HBB) (Streptopelia orientalis (Eastern turtle dove)).